The following is a 627-amino-acid chain: (-)-alpha-terpineol synthase, chloroplastic (627 aa).

Residues 1–52 constitute a chloroplast transit peptide; sequence MDLISVLPSASKSCVCLHKPLSSSTHKLKPFCKTIRILVMPRRWEFARPSMS. Mg(2+) contacts are provided by D378, D382, and D530. A DDXXD motif motif is present at residues 378–382; that stretch reads DDMYD.

This sequence belongs to the terpene synthase family. Tpsd subfamily. Mg(2+) serves as cofactor. Mn(2+) is required as a cofactor.

It is found in the plastid. The protein resides in the chloroplast. The catalysed reaction is (2E)-geranyl diphosphate + H2O = (S)-alpha-terpineol + diphosphate. The protein operates within terpene metabolism; oleoresin biosynthesis. In terms of biological role, involved in defensive oleoresin formation in conifers in response to insect attack or other injury. Involved in monoterpene (C10) olefins biosynthesis. Produces 57.3% alpha-terpineol (15.1% (+)/84.9% (-)), 27.6% limonene (25.2% (+)/74.8% (-)), 8% terpinolene, 4.7% beta-pinene (14.8% (+)/85.2% (-)), 1.3% alpha-pinene (100% (+)) and 1.1% myrcene. The sequence is that of (-)-alpha-terpineol synthase, chloroplastic (PT10) from Pinus taeda (Loblolly pine).